The sequence spans 480 residues: 3-isopropylmalate dehydratase large subunit (480 aa).

The [4Fe-4S] cluster site is built by Cys360, Cys418, and Cys421.

Belongs to the aconitase/IPM isomerase family. LeuC type 1 subfamily. Heterodimer of LeuC and LeuD. [4Fe-4S] cluster is required as a cofactor.

It catalyses the reaction (2R,3S)-3-isopropylmalate = (2S)-2-isopropylmalate. The protein operates within amino-acid biosynthesis; L-leucine biosynthesis; L-leucine from 3-methyl-2-oxobutanoate: step 2/4. Functionally, catalyzes the isomerization between 2-isopropylmalate and 3-isopropylmalate, via the formation of 2-isopropylmaleate. The chain is 3-isopropylmalate dehydratase large subunit from Anaeromyxobacter dehalogenans (strain 2CP-1 / ATCC BAA-258).